We begin with the raw amino-acid sequence, 470 residues long: MFSLLLLTSTALVETALGVSPSYNGLGLTPQMGWNNWNTFACNVTEQLLLGTADRISELGLKDVGYNYVILDDCWSGGRSSNGSLVPDLNKFPHGMKYVADHLHDQDLLFGMYSSAGEYTCAGYPGSLGHEEKDAQFFARNEVDYLKYDNCYNKGQFGTPQASYERYKAMSDALNNTGRPIFYSLCNWGQDLTFYWGSAIANSWRMSGDITADFDRPDSRCPCGDDEYDCKYAGYHCSIMNILNKAAPMGQNANPGGWNDLDMLEVGVGNLTDDEEKAHFSMWAMVRSPLIIGADVNHLKPSSFSIYAQSPVIAINQDPRGVPATRVWRRQVSDTDAYGRGEVQFWSGPLENGDQVIAFLNGGNRMRPMNAGLDDIFFDSHPGAPELNSTWAVYDLWANRMEDSVASDILNGNRSSNGLLYNSTQQSYSQGLARNDSRLFGSQIGTIQAGGRLNVTVPAHGVGLYRLRLQ.

Positions 1-18 are cleaved as a signal peptide; it reads MFSLLLLTSTALVETALG. An intrachain disulfide couples cysteine 42 to cysteine 74. The N-linked (GlcNAc...) asparagine glycan is linked to asparagine 43. 2 residues coordinate substrate: aspartate 72 and aspartate 73. A glycan (N-linked (GlcNAc...) asparagine) is linked at asparagine 82. Cysteine 121 and cysteine 151 are disulfide-bonded. Position 147 (lysine 147) interacts with substrate. Aspartate 149 acts as the Nucleophile in catalysis. An N-linked (GlcNAc...) asparagine glycan is attached at asparagine 175. Arginine 205 is a binding site for substrate. Residue aspartate 209 is the Proton donor of the active site. 2 disulfides stabilise this stretch: cysteine 221-cysteine 237 and cysteine 223-cysteine 230. Glutamine 251 is a substrate binding site. 6 N-linked (GlcNAc...) asparagine glycosylation sites follow: asparagine 270, asparagine 388, asparagine 413, asparagine 422, asparagine 435, and asparagine 454.

This sequence belongs to the glycosyl hydrolase 27 family. Homotetramer.

It is found in the secreted. It catalyses the reaction Hydrolysis of terminal, non-reducing alpha-D-galactose residues in alpha-D-galactosides, including galactose oligosaccharides, galactomannans and galactolipids.. This chain is Alpha-galactosidase (MEL), found in Zygotorulaspora mrakii (Zygosaccharomyces mrakii).